Consider the following 682-residue polypeptide: Two-component system protein A (682 aa).

Residues 11-41 form a disordered region; it reads SLDDNDNGQQHQDEVQAKHQDQGHTCPSRPS. The span at 21–32 shows a compositional bias: basic and acidic residues; that stretch reads HQDEVQAKHQDQ. PAS domains follow at residues 45-105 and 166-239; these read LSRI…PILY and MNET…LREG. In terms of domain architecture, PAC spans 241-292; it reads IEDEGWRYRRDGSRFWANVLITPIYQFGQHVGFVKVTRDLTERKEAEACMIA. A Histidine kinase domain is found at 307 to 530; it reads NISHEIRTPM…VFWFTAKMGG (224 aa). A Phosphohistidine; by autocatalysis modification is found at His310. The Response regulatory domain maps to 563 to 680; that stretch reads HVLLVEDNIV…QLLRVLWKWF (118 aa). Asp615 carries the post-translational modification 4-aspartylphosphate.

Activation probably requires a transfer of a phosphate group between a His in the histidine kinase domain and an Asp of the response regulatory domain.

It is found in the cytoplasm. It carries out the reaction ATP + protein L-histidine = ADP + protein N-phospho-L-histidine.. Its function is as follows. May be part of a two-component regulatory system required for formation of conidia on certain growth media. The protein is Two-component system protein A of Emericella nidulans (strain FGSC A4 / ATCC 38163 / CBS 112.46 / NRRL 194 / M139) (Aspergillus nidulans).